Here is a 434-residue protein sequence, read N- to C-terminus: Na(+)/H(+) antiporter NhaA 1 (434 aa).

11 helical membrane passes run 34 to 54 (GLLL…PWSA), 73 to 93 (LTLG…VAGL), 111 to 131 (ALPV…YVLW), 141 to 161 (GWAI…AVIS), 171 to 191 (FLLT…ALFY), 194 to 214 (ELHL…ALLV), 233 to 253 (VLVH…GFAV), 278 to 298 (SAGL…VGGF), 313 to 333 (VVTG…WLLA), 346 to 366 (WVDV…SLLI), and 380 to 400 (HVKV…TGVL).

The protein belongs to the NhaA Na(+)/H(+) (TC 2.A.33) antiporter family.

The protein localises to the cell membrane. It carries out the reaction Na(+)(in) + 2 H(+)(out) = Na(+)(out) + 2 H(+)(in). Its function is as follows. Na(+)/H(+) antiporter that extrudes sodium in exchange for external protons. The polypeptide is Na(+)/H(+) antiporter NhaA 1 (Nocardioides sp. (strain ATCC BAA-499 / JS614)).